The following is a 373-amino-acid chain: Dual-specificity RNA methyltransferase RlmN (373 aa).

E94 acts as the Proton acceptor in catalysis. One can recognise a Radical SAM core domain in the interval 100–339 (DGDRATLCVS…VTVRKTRGDD (240 aa)). An intrachain disulfide couples C107 to C344. Residues C114, C118, and C121 each coordinate [4Fe-4S] cluster. S-adenosyl-L-methionine is bound by residues 168–169 (GE), S200, 222–224 (SLH), and N301. C344 serves as the catalytic S-methylcysteine intermediate.

It belongs to the radical SAM superfamily. RlmN family. [4Fe-4S] cluster serves as cofactor.

It is found in the cytoplasm. It catalyses the reaction adenosine(2503) in 23S rRNA + 2 reduced [2Fe-2S]-[ferredoxin] + 2 S-adenosyl-L-methionine = 2-methyladenosine(2503) in 23S rRNA + 5'-deoxyadenosine + L-methionine + 2 oxidized [2Fe-2S]-[ferredoxin] + S-adenosyl-L-homocysteine. The enzyme catalyses adenosine(37) in tRNA + 2 reduced [2Fe-2S]-[ferredoxin] + 2 S-adenosyl-L-methionine = 2-methyladenosine(37) in tRNA + 5'-deoxyadenosine + L-methionine + 2 oxidized [2Fe-2S]-[ferredoxin] + S-adenosyl-L-homocysteine. Specifically methylates position 2 of adenine 2503 in 23S rRNA and position 2 of adenine 37 in tRNAs. m2A2503 modification seems to play a crucial role in the proofreading step occurring at the peptidyl transferase center and thus would serve to optimize ribosomal fidelity. This is Dual-specificity RNA methyltransferase RlmN from Photobacterium profundum (strain SS9).